The sequence spans 199 residues: dTTP/UTP pyrophosphatase (199 aa).

The Proton acceptor role is filled by aspartate 73.

The protein belongs to the Maf family. YhdE subfamily. It depends on a divalent metal cation as a cofactor.

Its subcellular location is the cytoplasm. It catalyses the reaction dTTP + H2O = dTMP + diphosphate + H(+). It carries out the reaction UTP + H2O = UMP + diphosphate + H(+). Functionally, nucleoside triphosphate pyrophosphatase that hydrolyzes dTTP and UTP. May have a dual role in cell division arrest and in preventing the incorporation of modified nucleotides into cellular nucleic acids. This is dTTP/UTP pyrophosphatase from Caldicellulosiruptor saccharolyticus (strain ATCC 43494 / DSM 8903 / Tp8T 6331).